Here is a 420-residue protein sequence, read N- to C-terminus: Glycerol-3-phosphate dehydrogenase [NAD(+)] 2, chloroplastic (420 aa).

A chloroplast-targeting transit peptide spans 1-45; that stretch reads MAASVQPACLDLHFSGKHPPLLKHNAIIVRCVSSPNVIPEADSIS. NAD(+)-binding positions include 94–99, F171, K194, and A228; that span reads GGGSFG. Residue K194 participates in substrate binding. Catalysis depends on K279, which acts as the Proton acceptor. Residues R343 and E369 each coordinate NAD(+). Substrate is bound at residue 343–344; the sequence is RN.

This sequence belongs to the NAD-dependent glycerol-3-phosphate dehydrogenase family.

It is found in the plastid. The protein localises to the chloroplast. The catalysed reaction is sn-glycerol 3-phosphate + NAD(+) = dihydroxyacetone phosphate + NADH + H(+). The protein operates within membrane lipid metabolism; glycerophospholipid metabolism. Its function is as follows. Required to supply glycerol-3-phosphate in the chloroplast for the synthesis of glycerolipids. Required for activation of systemic acquired resistance (SAR). Provision of glycerol-3-phosphate may be involved in generating lipid signals necessary for mediating defense responses and SAR. The sequence is that of Glycerol-3-phosphate dehydrogenase [NAD(+)] 2, chloroplastic (GLY1) from Arabidopsis thaliana (Mouse-ear cress).